We begin with the raw amino-acid sequence, 378 residues long: MKVPFLQLLCLNAALASANVVQGAAQGFAAGVTGGGDITPSYPKTNEELVSLLESDEPQVVVLTKTFDFIGTEGTTTEDGCAPWGTGKSCQLAINSNGWCGKNPVVTITYDNAAKNGIHIKSNKTLVGEGDKGVLSGKGLYFEGGVSNIIVQNIKITNLNPGFVWGGDAFTFFGADLIWIDHCETSLTGRQHYVTGFHPNTRMTWSNNFLNGVTTHSAGCDDHHYWTMELVGPGDEITFQNNYVYHTTGRGPALSGTTLFHAVNSVWSSIPGHAIEGGDKGRGLFEGCFFEDVVEIAPAKPENQLFSASEANAASCKSALGRACQANGYSKSGAFGSSETGFFKDFAGLTIAPAGSATDALAYVPKNCGIGRLESCDA.

The signal sequence occupies residues 1–18 (MKVPFLQLLCLNAALASA). Disulfide bonds link Cys81/Cys100 and Cys90/Cys220. The N-linked (GlcNAc...) asparagine glycan is linked to Asn123. Arg250 is a catalytic residue. Cys316 and Cys324 form a disulfide bridge.

It belongs to the polysaccharide lyase 1 family.

The protein localises to the secreted. It carries out the reaction Eliminative cleavage of (1-&gt;4)-alpha-D-galacturonan methyl ester to give oligosaccharides with 4-deoxy-6-O-methyl-alpha-D-galact-4-enuronosyl groups at their non-reducing ends.. Functionally, pectinolytic enzymes consist of four classes of enzymes: pectin lyase, polygalacturonase, pectin methylesterase and rhamnogalacturonase. Among pectinolytic enzymes, pectin lyase is the most important in depolymerization of pectin, since it cleaves internal glycosidic bonds of highly methylated pectins. The polypeptide is Probable pectin lyase C (pelC) (Aspergillus niger).